The primary structure comprises 1240 residues: DNA-directed RNA polymerase subunit beta (1240 aa).

Belongs to the RNA polymerase beta chain family. In terms of assembly, the RNAP catalytic core consists of 2 alpha, 1 beta, 1 beta' and 1 omega subunit. When a sigma factor is associated with the core the holoenzyme is formed, which can initiate transcription.

It catalyses the reaction RNA(n) + a ribonucleoside 5'-triphosphate = RNA(n+1) + diphosphate. DNA-dependent RNA polymerase catalyzes the transcription of DNA into RNA using the four ribonucleoside triphosphates as substrates. The chain is DNA-directed RNA polymerase subunit beta from Rhodopirellula baltica (strain DSM 10527 / NCIMB 13988 / SH1).